The sequence spans 261 residues: Eukaryotic translation initiation factor 3 subunit G (261 aa).

Residues 156–180 (QDADSKNALGLRGDGRQMERNRSDE) form a disordered region. Residues 168–180 (GDGRQMERNRSDE) are compositionally biased toward basic and acidic residues. In terms of domain architecture, RRM spans 181–259 (NTCRVTNLPQ…MVLKVEWTRP (79 aa)).

This sequence belongs to the eIF-3 subunit G family. As to quaternary structure, component of the eukaryotic translation initiation factor 3 (eIF-3) complex.

It localises to the cytoplasm. In terms of biological role, RNA-binding component of the eukaryotic translation initiation factor 3 (eIF-3) complex, which is involved in protein synthesis of a specialized repertoire of mRNAs and, together with other initiation factors, stimulates binding of mRNA and methionyl-tRNAi to the 40S ribosome. The eIF-3 complex specifically targets and initiates translation of a subset of mRNAs involved in cell proliferation. This subunit can bind 18S rRNA. This is Eukaryotic translation initiation factor 3 subunit G from Caenorhabditis briggsae.